We begin with the raw amino-acid sequence, 262 residues long: UPF0739 protein C1orf74 homolog (262 aa).

Belongs to the UPF0739 family.

In Xenopus laevis (African clawed frog), this protein is UPF0739 protein C1orf74 homolog.